We begin with the raw amino-acid sequence, 118 residues long: Ribosome-binding factor A (118 aa).

The protein belongs to the RbfA family. Monomer. Binds 30S ribosomal subunits, but not 50S ribosomal subunits or 70S ribosomes.

The protein resides in the cytoplasm. One of several proteins that assist in the late maturation steps of the functional core of the 30S ribosomal subunit. Associates with free 30S ribosomal subunits (but not with 30S subunits that are part of 70S ribosomes or polysomes). Required for efficient processing of 16S rRNA. May interact with the 5'-terminal helix region of 16S rRNA. The polypeptide is Ribosome-binding factor A (Geobacter metallireducens (strain ATCC 53774 / DSM 7210 / GS-15)).